The following is a 149-amino-acid chain: Ricin B-like lectin (149 aa).

The residue at position 2 (serine 2) is an N-acetylserine. 4 residues coordinate a carbohydrate: aspartate 21, glycine 24, asparagine 39, and asparagine 47. Residues 110-112 are involved in dimerization; it reads PNL.

In terms of assembly, homodimer. In terms of processing, the N-terminus is blocked.

Lectin specific for terminal, non-reducing N-acetylgalactosamine (Gal-NAc)-containing carbohydrates including N,N'-diacetyllactosediamine/LDN (GalNAcbeta1-4GlcNAc, LacdiNAc). Specific also for carbohydrates containing N-acetylglucosamine (-GlcNAc) or N-acetyllactosamine (-Galbeta1-4GlcNAc) at the reducing end. Agglutinates human blood group A, AB, B and O erythrocytes with a strong preference for group A. Agglutinates bovine erythrocytes with a very low specificity. Binds carbohydrates bivalently, which is required for its biological activity. Exhibits insecticidal activity against the fruit fly D.melanogaster, mosquito A.aegypti, and amoebozoa A.castellanii. Has anti-nutritional activity against Colorado potato beetle L.decemlineata, and against worm C.elegans. Has antiproliferative activity against human leukemic T-cells. Has an immunostimulatory effect on human antigen-presenting dendritic cells, which are subsequently able to induce efficient T-cell immune responses. The protein is Ricin B-like lectin of Clitocybe nebularis (Clouded agaric).